Here is a 297-residue protein sequence, read N- to C-terminus: Internalin C (297 aa).

An N-terminal signal peptide occupies residues Met1–Ala34. LRR repeat units lie at residues Leu74–Phe96, Thr97–Lys120, Glu122–Ser139, Ala140–Leu161, Lys162–Ser184, and Leu186–Lys207.

It belongs to the internalin family. As to quaternary structure, interacts in vitro with human intestinal mucin-2 (MUC2) but not with mucin-1; binding is slightly better at pH 5.5, (the pH of the intestine) than at pH 7.4. Interacts with the SH3 6 domain of human DNMBP (Tuba). Interacts with I-kappa-B kinase alpha (IKKA, CHUK).

The protein localises to the secreted. It localises to the host cytoplasm. Its function is as follows. A virulence enhancer that has at least 2 dissociable functions in infection; it impairs translocation of host transcription factor NF-kappa-B to the nucleus and antagonizes the function of the Tuba dynamin-binding protein, promoting bacterial spreading. Perturbs the morphology of host cell junctions by impairing host DNMBP (Tuba) and WASL interaction, altering cortical tension at the cell junctions and allowing bacteria to more efficiently form bacteria-filled cell protrusions which promote bacterial spreading within infected host tissue. Down-regulates the host inflammation response usually induced by Listeria infection. Interacts with host I-kappa-B kinase alpha (IKKA, CHUK), which prevents IKKA from phosphorylating NF-kappa-B inhibitor alpha (IKBA, NFKBIA) and thus delays degradation of phospho-IKBA. Translocation of host transcription factor p65 (a subunit of NF-kappa-B, RELA) into the nucleus is impaired, which prevents activation of NF-KB-regulated genes. Recognized by serum from healthy humans exposed to L.monocytogenes as well from patients who have recovered from listeriosis. The sequence is that of Internalin C from Listeria monocytogenes serotype 1/2a (strain EGD / Mackaness).